The primary structure comprises 433 residues: ATP-dependent protease ATPase subunit HslU (433 aa).

ATP contacts are provided by residues Val18, 60–65 (GVGKTE), Asp246, Glu311, and Arg383.

This sequence belongs to the ClpX chaperone family. HslU subfamily. As to quaternary structure, a double ring-shaped homohexamer of HslV is capped on each side by a ring-shaped HslU homohexamer. The assembly of the HslU/HslV complex is dependent on binding of ATP.

It is found in the cytoplasm. Its function is as follows. ATPase subunit of a proteasome-like degradation complex; this subunit has chaperone activity. The binding of ATP and its subsequent hydrolysis by HslU are essential for unfolding of protein substrates subsequently hydrolyzed by HslV. HslU recognizes the N-terminal part of its protein substrates and unfolds these before they are guided to HslV for hydrolysis. This chain is ATP-dependent protease ATPase subunit HslU, found in Rhodopseudomonas palustris (strain HaA2).